The primary structure comprises 107 residues: Urease subunit beta (107 aa).

This sequence belongs to the urease beta subunit family. As to quaternary structure, heterotrimer of UreA (gamma), UreB (beta) and UreC (alpha) subunits. Three heterotrimers associate to form the active enzyme.

The protein localises to the cytoplasm. The enzyme catalyses urea + 2 H2O + H(+) = hydrogencarbonate + 2 NH4(+). The protein operates within nitrogen metabolism; urea degradation; CO(2) and NH(3) from urea (urease route): step 1/1. The chain is Urease subunit beta from Escherichia coli.